We begin with the raw amino-acid sequence, 1111 residues long: ATP-dependent DNA helicase mph1 (1111 aa).

Composition is skewed to acidic residues over residues 1–18 and 47–65; these read MSVSGDDSDDYFDHEIDD and VFDESDISIDQGDGEDEFQ. Disordered regions lie at residues 1 to 81, 101 to 144, 210 to 240, and 259 to 280; these read MSVS…EDVE, FVTQ…HQPD, AFDSDLSLSPPRTTSQATRGPPVQSQFRTNR, and IPSQRGEQILSPPEKNEPPTHH. Composition is skewed to polar residues over residues 132–143 and 215–238; these read PTTTTVDASHQP and LSLSPPRTTSQATRGPPVQSQFRT. Residues 306–474 enclose the Helicase ATP-binding domain; sequence IAQRGLFHNL…AVIDGLGIAK (169 aa). 319–326 contributes to the ATP binding site; the sequence is LPTGLGKT. The short motif at 422 to 425 is the DEAH box element; sequence DEAH. Residues 644-818 form the Helicase C-terminal domain; the sequence is YLKQVVLNHF…GTRFTFHDDT (175 aa). Disordered regions lie at residues 836–898, 998–1047, and 1092–1111; these read IDIP…RKPT, SVLS…CTPE, and AERHVSRKRNRFVLDDDTEE. Positions 852-864 are enriched in basic residues; it reads KRARPPKRPPKKF.

The protein belongs to the DEAD box helicase family. DEAH subfamily. FANCM sub-subfamily. As to quaternary structure, interacts with the MHF histone-fold complex to form the FANCM-MHF complex.

Its subcellular location is the nucleus. It catalyses the reaction ATP + H2O = ADP + phosphate + H(+). ATP-dependent DNA helicase involved in DNA damage repair by homologous recombination and in genome maintenance. Capable of unwinding D-loops. Plays a role in limiting crossover recombinants during mitotic DNA double-strand break (DSB) repair. Component of a FANCM-MHF complex which promotes gene conversion at blocked replication forks, probably by reversal of the stalled fork. The sequence is that of ATP-dependent DNA helicase mph1 from Neosartorya fischeri (strain ATCC 1020 / DSM 3700 / CBS 544.65 / FGSC A1164 / JCM 1740 / NRRL 181 / WB 181) (Aspergillus fischerianus).